Consider the following 1534-residue polypeptide: MQSNLLQFSNLRTGNLRLASTNRGSANGGGSSTMESGTSGAGSSSNKQVNMVIENNTLTIGGTEGKRAFGRRLQMDTSGLKVKSKVDQEELESAMKTPISGIPFFNQSSRRSYQFELSFHNTPVSDDCHVLIDVSQLPGAREGDLAELRTYHRSPGTRDKKVYFKIKSLDVEARRRSATTGLSILTGQLRYLLDLPSRSPVWVKLKSKNEHQADLVELHVKDCHVNRGDMWCISSTLLDTCVFTGQRVTYINALRLIVKAIYRNGKKVISGYVGNNTKVIFASESARIIFLIQITEEMWHFEQNGEKTFHKVVNSLFPRILKRWKDIGTYHTITIVFCASVDESGQSFRNIPPGVRLKNTKDYFRIVVDRVNILYWDEIMKTLRKEFMQIIGDLRNTQTDDGGGPIRWSFTPVIKSNILETINFATTLLADQFRVPDLKHTVTHVIIISPGTGLYDVNYDLLKVTCRKLLSLEIAVDLICLSRAPLHIVPLFRYIDYQGELCHSAPTWLSISFWDDNKKSQEWHPRCKIYDVQMMGVTERRDSEEVTLNYMNSALHTTSVTDFMDQYDKEVFDADKCYPLSNENRESTPLEDTSNIESTVLPKSGHEVQSIVWKPPRSSKPLVEPTTVQSVIVSLHQPGTINNSSEDDLTDTSSSNSSPEANESLALASLKNMTQISRGLTKRIVSKLIPDIKSKRSRHSIMATGNEHPRNDTYEDIEDIRKVDCHSTGTNITFLKPTFRSMDAEHYNPPDTVSSHGSAGTDSRRESLMFEKKSVLLDDFAKKKSNVNKYIKEKSLVDSLIHLDNPSVCFSGEVATMLIPDRWKDVYPKYVAKKYTKWRSFTTPAELPITTVHFPSLSDFESNFIFRNHSVSLNIDREVYGQTTFDLLRDMIYIRLLAGFQICTSELLKKVEATGSNEIHEQEIAKVLSKDNYMVAIYYMIIDNEVHRIKCGYNGTIDVQRFLRKNENKMMDTIAKYTPLVRTRYEHSYRPCKMDPLRISRTSLRWNQVDQILAGYYDSMMDSSKIGFRSKFVILPADIPPNTFSSTVNGRKETLSAEEIRLEGLRKLISSISKSRLRTNPEKATKASRKEEILPEVHFYTGSLFEYLADHHDNLEHVDSPAKDAQSADLSKFNRDAELSRLAYELQHGEKPIKLTNRKWHFKNHSSCFVGLEMVNWLIENFSDIDTRDEAVIYGQQLLTDGLFHHVDRRHGFLDGHYFYRISDPFVDIKIEKGSAESPLNSDPITINRRVSASTIISSKQNSSGMIQSKNGDSELLDRQSVNDEGKTIVISTAIDIDLDPAGNSHKLETCTVHYDQVHNPDHCFHIRIEWLTATPKLLDDLVTNWGRLCERYGLRLVEIPWHELCTIPSFDPTHSFIEATLAINPWTDPEFMDAEIFASQKYFYHVHLLESFGFLLDNRASRILQNERVSFNVVYSWGKPSFKYAQFIHNTGAYMAEIRENGDLFLAPNNLYLSRNGIGNSSGSLHLGPKSAIYSEKVMLDFKHVCEDYKKLRSVFWEARDKWQQTRNTLEEY.

Disordered stretches follow at residues 19-48 (ASTNRGSANGGGSSTMESGTSGAGSSSNKQ), 580-601 (LSNENRESTPLEDTSNIESTVL), and 637-662 (QPGTINNSSEDDLTDTSSSNSSPEAN). Over residues 32-45 (STMESGTSGAGSSS) the composition is skewed to low complexity. Positions 651–662 (DTSSSNSSPEAN) are enriched in low complexity. Residues 1149-1224 (GEKPIKLTNR…DGHYFYRISD (76 aa)) form the DEP domain.

This sequence belongs to the IML1 family.

It is found in the vacuole membrane. The sequence is that of Vacuolar membrane-associated protein IML1 (IML1) from Eremothecium gossypii (strain ATCC 10895 / CBS 109.51 / FGSC 9923 / NRRL Y-1056) (Yeast).